The following is a 427-amino-acid chain: Enolase (427 aa).

Gln163 provides a ligand contact to (2R)-2-phosphoglycerate. Glu205 serves as the catalytic Proton donor. Residues Asp242, Glu285, and Asp312 each contribute to the Mg(2+) site. (2R)-2-phosphoglycerate is bound by residues Lys337, Arg366, Ser367, and Lys388. Lys337 functions as the Proton acceptor in the catalytic mechanism.

Belongs to the enolase family. It depends on Mg(2+) as a cofactor.

It localises to the cytoplasm. The protein localises to the secreted. The protein resides in the cell surface. It catalyses the reaction (2R)-2-phosphoglycerate = phosphoenolpyruvate + H2O. It functions in the pathway carbohydrate degradation; glycolysis; pyruvate from D-glyceraldehyde 3-phosphate: step 4/5. Functionally, catalyzes the reversible conversion of 2-phosphoglycerate (2-PG) into phosphoenolpyruvate (PEP). It is essential for the degradation of carbohydrates via glycolysis. This chain is Enolase, found in Bradyrhizobium sp. (strain BTAi1 / ATCC BAA-1182).